Reading from the N-terminus, the 1189-residue chain is Ras-specific guanine nucleotide-releasing factor 2 (1189 aa).

Residues E22–Y133 enclose the PH 1 domain. A coiled-coil region spans residues K158–R193. The IQ domain occupies D205 to C234. The DH domain maps to K243–E429. In terms of domain architecture, PH 2 spans P470 to D588. One can recognise an N-terminal Ras-GEF domain in the interval K635–G755. Residues V713 to P738 form a disordered region. Phosphoserine occurs at positions 725 and 726. S736 is subject to Phosphoserine; by CDK5. The segment at K743–N751 is regulates proteasomal degradation. A phosphoserine mark is found at S745 and S749. The disordered stretch occupies residues L757 to P817. Over residues S762–A776 the composition is skewed to low complexity. Residues S801, S805, and S924 each carry the phosphoserine modification. Residues S954 to R1186 enclose the Ras-GEF domain. The interval A1051–K1080 is responsible of the affinity for farnesylated versus geranylgeranylated Ras.

As to quaternary structure, homooligomer and heterooligomer with RASGRF1. Interacts with Ras and RAC1. Interacts in a calcium-dependent manner with calmodulin. Interacts with EPB49 and probably CDK5R1. Interacts with the AMPA receptor through GRIA1. Interacts with microtubules. Phosphorylated by CDK5; down-regulates RASGRF2-mediated RAC1 activation. In terms of processing, ubiquitinated upon interaction with Ras. Ubiquitination leads to degradation through the 26S proteasome. Expressed in brain in the nucleus of the solitary tract. Not observed in the hippocampus (at protein level).

It is found in the cytoplasm. Its subcellular location is the cell membrane. It localises to the endoplasmic reticulum membrane. In terms of biological role, functions as a calcium-regulated nucleotide exchange factor activating both Ras and RAC1 through the exchange of bound GDP for GTP. Preferentially activates HRAS in vivo compared to RRAS based on their different types of prenylation. Functions in synaptic plasticity by contributing to the induction of long term potentiation. This Mus musculus (Mouse) protein is Ras-specific guanine nucleotide-releasing factor 2 (Rasgrf2).